A 323-amino-acid chain; its full sequence is Serine/threonine-protein phosphatase PP1-gamma catalytic subunit B (323 aa).

Mn(2+)-binding residues include D64, H66, D92, and N124. The Proton donor role is filled by H125. Mn(2+)-binding residues include H173 and H248. The disordered stretch occupies residues 301–323 (KKKPNASRPVTPPRGIITKQAKK).

Belongs to the PPP phosphatase family. PP-1 subfamily. As to quaternary structure, PP1 comprises a catalytic subunit, ppp1c1, ppp1cb or ppp1cc, which is folded into its native form by inhibitor 2 and glycogen synthetase kinase 3, and then is complexed to one or several targeting or regulatory subunits. Mn(2+) serves as cofactor.

The protein localises to the cytoplasm. Its subcellular location is the nucleus. The protein resides in the cleavage furrow. It is found in the nucleolus. It localises to the nucleoplasm. The protein localises to the chromosome. Its subcellular location is the centromere. The protein resides in the kinetochore. It is found in the nucleus speckle. It localises to the midbody. The protein localises to the mitochondrion. The enzyme catalyses O-phospho-L-seryl-[protein] + H2O = L-seryl-[protein] + phosphate. It catalyses the reaction O-phospho-L-threonyl-[protein] + H2O = L-threonyl-[protein] + phosphate. Functionally, protein phosphatase that associates with over 200 regulatory proteins to form highly specific holoenzymes which dephosphorylate hundreds of biological targets. Protein phosphatase 1 (PP1) is essential for cell division, and participates in the regulation of glycogen metabolism, muscle contractility and protein synthesis. Promotes nuclear envelope reassembly by targeting nuclear membrane vesicles to chromatin at the end of mitosis. Acts by dephosphorylating membrane proteins such as lamin B receptor (lbr) to regulate the binding of membrane proteins to chromatin. The protein is Serine/threonine-protein phosphatase PP1-gamma catalytic subunit B (ppp1cc-b) of Xenopus laevis (African clawed frog).